A 731-amino-acid chain; its full sequence is Cell death abnormality protein 12 (731 aa).

One can recognise an ELMO domain in the interval 339-485; that stretch reads AEVQKILDIE…VVLEQLRHVL (147 aa). The PH domain occupies 544-679; that stretch reads VRINHLNYLK…WLEGLAELIG (136 aa). The SH3-binding signature appears at 715–718; it reads PEIP.

In terms of assembly, interacts with psr-1. Forms a ternary complex with ced-2 and ced-5.

It is found in the cytoplasm. Involved in programmed apoptosis and necrosis. Required for the cell corpse engulfment process. Has roles in the formation of actin halos and distal tip cell migration. Negatively regulates the unc-6/Netrin receptor unc-5 to control distal tip cell migration along the anterior-posterior axis of the body. Plays no role in amphid axon outgrowth. The polypeptide is Cell death abnormality protein 12 (Caenorhabditis elegans).